The following is a 117-amino-acid chain: Glycine cleavage system H-like protein (117 aa).

The Lipoyl-binding domain occupies 21 to 103; sequence IVKLGLSSQM…ESEGWFVVLQ (83 aa). Lys-62 bears the N6-lipoyllysine mark.

This sequence belongs to the GcvH family. (R)-lipoate is required as a cofactor.

This chain is Glycine cleavage system H-like protein, found in Chlamydia trachomatis serovar D (strain ATCC VR-885 / DSM 19411 / UW-3/Cx).